We begin with the raw amino-acid sequence, 367 residues long: MYFELAKRNLKRNLLRSILALLGIIIGVAAISSLGILGGGLKQGIMENLGSISNYIIVFPNYQNGYTSFDKRDIEKLRVLNCKVIPVYATSDFVYIKGKNRKAYANIFGIDKNDIKYLNLKVKVSDTSVAVDTFFSNVNDVNVGNQLEIKNISLRICGIYNSTFLFPDNSLILTAKTYRRFYGENNYNYSRIILYVKNINDIDKIKNETDKILNRKEKKCIIISLNSILEAINGVITKVSYFLMGIGAISLLVAGIGIGNVMLMSVVERTTEIGVMRSIGASKKDIIILFLYEALILGVIGSLIGAFLSLFFGYLIVHYLLKTSLSYYAIFYMIIGIIFGILTSLISALYPAYKASKLDPIKSLRNE.

Helical transmembrane passes span 18–38 (ILAL…GILG), 239–259 (VSYF…IGIG), 296–316 (ILGV…GYLI), and 329–349 (AIFY…ISAL).

This sequence belongs to the ABC-4 integral membrane protein family.

The protein resides in the cell membrane. This is an uncharacterized protein from Methanocaldococcus jannaschii (strain ATCC 43067 / DSM 2661 / JAL-1 / JCM 10045 / NBRC 100440) (Methanococcus jannaschii).